Reading from the N-terminus, the 60-residue chain is Metallothionein A (60 aa).

The beta stretch occupies residues 1 to 28; it reads MDPCDCSKSGTCNCGGSCTCTNCSCKSC. A divalent metal cation is bound by residues Cys4, Cys6, Cys12, Cys14, Cys18, Cys20, Cys23, Cys25, Cys28, Cys32, Cys33, Cys35, Cys36, Cys40, Cys43, Cys47, Cys49, Cys54, Cys58, and Cys59. An alpha region spans residues 29 to 60; it reads KKSCCPCCPSGCTKCASGCVCKGKTCDTSCCQ.

It belongs to the metallothionein superfamily. Type 1 family.

In terms of biological role, metallothioneins have a high content of cysteine residues that bind various heavy metals. The sequence is that of Metallothionein A (mta) from Chionodraco hamatus (Antarctic teleost icefish).